A 270-amino-acid chain; its full sequence is uncharacterized protein (270 aa).

The N-terminal stretch at 1–22 (MEYIKKLLCTMSVLLLIIFIGG) is a signal peptide. Cysteine 23 carries N-palmitoyl cysteine lipidation. Cysteine 23 is lipidated: S-diacylglycerol cysteine.

The protein belongs to the staphylococcal tandem lipoprotein family.

It is found in the cell membrane. This is an uncharacterized protein from Staphylococcus aureus (strain bovine RF122 / ET3-1).